The chain runs to 368 residues: Phosphate acyltransferase (368 aa).

The interval 334–368 is disordered; it reads AAPLGESGRDADGAGQASPSAGQPAEPSAALSSKT.

Belongs to the PlsX family. Homodimer. Probably interacts with PlsY.

It is found in the cytoplasm. It catalyses the reaction a fatty acyl-[ACP] + phosphate = an acyl phosphate + holo-[ACP]. The protein operates within lipid metabolism; phospholipid metabolism. Functionally, catalyzes the reversible formation of acyl-phosphate (acyl-PO(4)) from acyl-[acyl-carrier-protein] (acyl-ACP). This enzyme utilizes acyl-ACP as fatty acyl donor, but not acyl-CoA. The chain is Phosphate acyltransferase from Burkholderia thailandensis (strain ATCC 700388 / DSM 13276 / CCUG 48851 / CIP 106301 / E264).